The primary structure comprises 545 residues: Phospholipase B-like 1 (545 aa).

A signal peptide spans 1 to 35 (MSRHSQDERLGLPQPPALLPLLLLLLAVAVPLSQA). N-linked (GlcNAc...) (high mannose) asparagine; alternate glycosylation is present at asparagine 68. N-linked (GlcNAc...) (hybrid) asparagine; alternate glycosylation is present at asparagine 68. The propeptide at 206–224 (LSPTKNSSLKFFKRWDMGH) is removed in mature form. Residues asparagine 305, asparagine 363, and asparagine 408 are each glycosylated (N-linked (GlcNAc...) (high mannose) asparagine; alternate). Residues asparagine 305, asparagine 363, and asparagine 408 are each glycosylated (N-linked (GlcNAc...) (hybrid) asparagine; alternate). 2 cysteine pairs are disulfide-bonded: cysteine 467–cysteine 472 and cysteine 471–cysteine 486. N-linked (GlcNAc...) (high mannose) asparagine; alternate glycosylation is present at asparagine 523. N-linked (GlcNAc...) (hybrid) asparagine; alternate glycosylation is present at asparagine 523.

The protein belongs to the phospholipase B-like family. In terms of assembly, may form a homodimer, each monomer is composed of a chain A and a chain B. In terms of processing, the maturation cleavages that produces chains A and B are required to open the putative substrate binding pocket. Both chains A and B remain associated in the mature protein.

The protein resides in the lysosome. Its function is as follows. Exhibits a weak phospholipase activity, acting on various phospholipids, including phosphatidylcholine, phosphatidylinositol, phosphatidylethanolamine and lysophospholipids. However, in view of the small size of the putative binding pocket, it has been proposed that it may act rather as an amidase or a peptidase. In Bos taurus (Bovine), this protein is Phospholipase B-like 1 (PLBD1).